A 200-amino-acid polypeptide reads, in one-letter code: Anthranilate synthase component 2, pyocyanine specific (200 aa).

One can recognise a Glutamine amidotransferase type-1 domain in the interval 2-195 (RITLLDNFDS…LLWCGALAVR (194 aa)). Residue 56–58 (GPG) participates in L-glutamine binding. C83 acts as the Nucleophile; for GATase activity in catalysis. L-glutamine contacts are provided by residues Q87 and 133–134 (SL). Residues H169 and E171 each act as for GATase activity in the active site.

Heterotetramer consisting of two non-identical subunits: a beta subunit (PhnB) and a large alpha subunit (PhnA).

The catalysed reaction is chorismate + L-glutamine = anthranilate + pyruvate + L-glutamate + H(+). It participates in secondary metabolite biosynthesis; pyocyanine biosynthesis. Part of a heterotetrameric complex that catalyzes the two-step biosynthesis of anthranilate, a precursor for Pseudomonas quinolone signal (2-heptyl-3-hydroxy-4-quinolone; PQS) production which is required to induce the genes for the biosynthesis of the virulence factor pyocyanine (PCN), a characteristic blue-green phenazine pigment produced by P.aeruginosa. In the first step, the glutamine-binding beta subunit (PhnB) of anthranilate synthase (AS) provides the glutamine amidotransferase activity which generates ammonia as a substrate that, along with chorismate, is used in the second step, catalyzed by the large alpha subunit of AS (PhnA) to produce anthranilate. The protein is Anthranilate synthase component 2, pyocyanine specific of Pseudomonas aeruginosa (strain ATCC 15692 / DSM 22644 / CIP 104116 / JCM 14847 / LMG 12228 / 1C / PRS 101 / PAO1).